Reading from the N-terminus, the 167-residue chain is DNA-directed RNA polymerase II subunit rpb-9 (167 aa).

Positions 28 to 49 (DDMYDQNGASPAPSQNEKPGKS) are disordered. A compositionally biased stretch (polar residues) spans 34–44 (NGASPAPSQNE). 8 residues coordinate Zn(2+): Cys59, Cys62, Cys81, Cys84, Cys128, Cys131, Cys156, and Cys161. The segment at 59-84 (CPECNNMLYPREDKESRVLMYSCRNC) adopts a C4-type zinc-finger fold. The TFIIS-type zinc-finger motif lies at 124 to 166 (EEHQCPVCGKSKAVFFQAQTKKAEEEMRLYYVCASQDCQHRWT).

It belongs to the archaeal RpoM/eukaryotic RPA12/RPB9/RPC11 RNA polymerase family. Component of the RNA polymerase II (Pol II) complex consisting of 12 subunits. As to expression, expressed in the soma and in the germline.

The protein resides in the nucleus. It is found in the nucleolus. In terms of biological role, DNA-dependent RNA polymerase catalyzes the transcription of DNA into RNA using the four ribonucleoside triphosphates as substrates. Component of RNA polymerase II which synthesizes mRNA precursors and many functional non-coding RNAs. Pol II is the central component of the basal RNA polymerase II transcription machinery. It is composed of mobile elements that move relative to each other. RPB9 is part of the upper jaw surrounding the central large cleft and thought to grab the incoming DNA template. Recruits ints-6, a component of the Integrator complex to PIWI-interacting RNA (piRNA) genes, to mediate Integrator complex-dependent cleavage of 3' ends of nascent transcripts upon RNA Pol II backtracking to terminate transcription and generate piRNA precursors. Promotes the biogenesis of secondary 22G-siRNAs (a class of 22 nucleotide siRNAs that possess a triphosphorylated guanine residue at the 5'-end). Involved in gene silencing mediated by a class of 21 nucleotide piRNAs that possess a uracil residue at the 5'-end (also called 21U-RNAs) and guide the Piwi protein prg-1 to its DNA targets for silencing. Plays a role in small RNA-directed transgenerational epigenetic inheritance (also called RNAe) over several generations. Not required for the transgenerational inheritance of exogenous small interfering RNAs (RNAi). May play a role in the silencing of the DNA transposable elements from the DNA transposon families, Chapaev-2 and CEMUDR1. The polypeptide is DNA-directed RNA polymerase II subunit rpb-9 (Caenorhabditis elegans).